Reading from the N-terminus, the 520-residue chain is Calcium-dependent protein kinase 25 (520 aa).

Residue Gly2 is the site of N-myristoyl glycine attachment. A disordered region spans residues 31–87 (PLKPQLQDKPPQPMLMNKDDDKTKLNDTHGDPKLLEGKEKPAQKQTSQGQGGRKCSD). The segment covering 47–72 (NKDDDKTKLNDTHGDPKLLEGKEKPA) has biased composition (basic and acidic residues). A Protein kinase domain is found at 132-390 (YNLGSKLGHG…AQQVLCHPWI (259 aa)). ATP contacts are provided by residues 138–146 (LGHGQFGTT) and Lys161. Asp256 serves as the catalytic Proton acceptor. Phosphoserine is present on Ser296. The tract at residues 396 to 426 (APDTPLDTTVLSRLKKFSATDKLKKMALRVI) is autoinhibitory domain. The region spanning 433–468 (EEIHELRETFKTIDSGKSGRVTYKELKNGLERFNTN) is the EF-hand 1 domain. 8 residues coordinate Ca(2+): Asp446, Ser450, Arg452, Glu457, Asp483, Glu487, Thr489, and Glu494. Residues 469-505 (LDNSDINSLMQIPTDVHLEDTVDYNEFIEAIVRLRQI) form the EF-hand 2; degenerate domain.

The protein belongs to the protein kinase superfamily. Ser/Thr protein kinase family. CDPK subfamily.

It is found in the membrane. The catalysed reaction is L-seryl-[protein] + ATP = O-phospho-L-seryl-[protein] + ADP + H(+). The enzyme catalyses L-threonyl-[protein] + ATP = O-phospho-L-threonyl-[protein] + ADP + H(+). With respect to regulation, activated by calcium. Autophosphorylation may play an important role in the regulation of the kinase activity. May play a role in signal transduction pathways that involve calcium as a second messenger. The chain is Calcium-dependent protein kinase 25 (CPK25) from Arabidopsis thaliana (Mouse-ear cress).